The following is a 660-amino-acid chain: MTGGRFDFDDGGTYCGGWEEGKAHGHGICTGPKGQGEYSGSWSHGFEVVGVYTWPSGNTYQGYWAQGKRHGLGVETKGKWMYRGEWSHGFKGRYGVRQSLCTPARYEGTWSNGLQDGYGVETYGDGGTYQGQWAGGMRHGYGVRQSVPYGMATVIRSPLRTSLASLRSEQSNGSVLHEAAAAAADSPAGTRGGFVLNFHADTELGKKKGGLFRRGSLLGSMKLRKSESKSSISSKRSSVRSDAAMSRISSSDANSTISFGDVDCDFCPVEDHVDATTTETYMGEWKNDKRNGFGISERSNGMKYEGEWANNKRHGYGCTVFPDGSKEEGKYKNNILVRGIRKQLIPIRNTKTREKVDRAIEGAQRAAAMARTKVEIANSRTAHARAKADAADQAALAARQECDIARAVARELSPDFYQPGPDYIKQRCQEGGDIKENPEEKVLEKPPSPKESPHFYRKGTTPPRSPESSPKQSHSPQPSSPEPSKKQNPSPGARLSQDKQSLAEEQVTAFVNKPSMSKAPAKELGASVSKYSGRHHVPNPSNGELHSQYHGYYVKLNTPQHPPEDREDDRGVSQSSSALVPRPSPNKWGPPKSVTKPVAKESKTEPKAKKSELAIPKNPASNDTCPSLEKEANSGPNSIMIVLVMLLNIGLAILFVHFLT.

The Cytoplasmic portion of the chain corresponds to 1-638; it reads MTGGRFDFDD…EKEANSGPNS (638 aa). MORN repeat units lie at residues 14 to 36, 38 to 59, 60 to 82, 106 to 128, and 129 to 151; these read YCGGWEEGKAHGHGICTGPKGQG, YSGSWSHGFEVVGVYTWPSGNT, YQGYWAQGKRHGLGVETKGKWMY, YEGTWSNGLQDGYGVETYGDGGT, and YQGQWAGGMRHGYGVRQSVPYGM. 3 positions are modified to phosphoserine: Ser157, Ser216, and Ser220. Positions 228–247 are disordered; sequence SKSSISSKRSSVRSDAAMSR. 2 MORN repeats span residues 281–303 and 304–326; these read YMGEWKNDKRNGFGISERSNGMK and YEGEWANNKRHGYGCTVFPDGSK. Over residues 437–454 the composition is skewed to basic and acidic residues; that stretch reads NPEEKVLEKPPSPKESPH. The segment at 437-631 is disordered; sequence NPEEKVLEKP…NDTCPSLEKE (195 aa). Ser452 carries the phosphoserine modification. Thr461 is modified (phosphothreonine). 3 positions are modified to phosphoserine: Ser465, Ser469, and Ser475. Low complexity predominate over residues 466-477; sequence PESSPKQSHSPQ. Composition is skewed to basic and acidic residues over residues 562–571 and 598–612; these read PPEDREDDRG and VAKESKTEPKAKKSE. Residues 639–659 form a helical; Anchor for type IV membrane protein membrane-spanning segment; sequence IMIVLVMLLNIGLAILFVHFL.

It belongs to the junctophilin family. In terms of tissue distribution, specifically expressed in skeletal muscle. Weakly expressed in embryos and neonates. Abundant in young adult muscles.

It localises to the cell membrane. It is found in the endoplasmic reticulum membrane. Its subcellular location is the sarcoplasmic reticulum membrane. Junctophilins contribute to the formation of junctional membrane complexes (JMCs) which link the plasma membrane with the endoplasmic or sarcoplasmic reticulum in excitable cells. Provides a structural foundation for functional cross-talk between the cell surface and intracellular calcium release channels. JPH1 contributes to the construction of the skeletal muscle triad by linking the t-tubule (transverse-tubule) and SR (sarcoplasmic reticulum) membranes. The protein is Junctophilin-1 (Jph1) of Mus musculus (Mouse).